The chain runs to 739 residues: Phosphoribosylformylglycinamidine synthase subunit PurL (739 aa).

The active site involves His-54. The ATP site is built by Tyr-57 and Lys-96. Glu-98 is a binding site for Mg(2+). Substrate contacts are provided by residues 99-102 and Arg-121; that span reads SHNH. Catalysis depends on His-100, which acts as the Proton acceptor. Asp-122 serves as a coordination point for Mg(2+). Gln-245 contributes to the substrate binding site. Asp-273 contributes to the Mg(2+) binding site. 317–319 serves as a coordination point for substrate; sequence ESQ. ATP contacts are provided by Asp-500 and Gly-537. Residue Asn-538 coordinates Mg(2+). Substrate is bound at residue Ser-540.

It belongs to the FGAMS family. As to quaternary structure, monomer. Part of the FGAM synthase complex composed of 1 PurL, 1 PurQ and 2 PurS subunits.

Its subcellular location is the cytoplasm. The catalysed reaction is N(2)-formyl-N(1)-(5-phospho-beta-D-ribosyl)glycinamide + L-glutamine + ATP + H2O = 2-formamido-N(1)-(5-O-phospho-beta-D-ribosyl)acetamidine + L-glutamate + ADP + phosphate + H(+). It functions in the pathway purine metabolism; IMP biosynthesis via de novo pathway; 5-amino-1-(5-phospho-D-ribosyl)imidazole from N(2)-formyl-N(1)-(5-phospho-D-ribosyl)glycinamide: step 1/2. Functionally, part of the phosphoribosylformylglycinamidine synthase complex involved in the purines biosynthetic pathway. Catalyzes the ATP-dependent conversion of formylglycinamide ribonucleotide (FGAR) and glutamine to yield formylglycinamidine ribonucleotide (FGAM) and glutamate. The FGAM synthase complex is composed of three subunits. PurQ produces an ammonia molecule by converting glutamine to glutamate. PurL transfers the ammonia molecule to FGAR to form FGAM in an ATP-dependent manner. PurS interacts with PurQ and PurL and is thought to assist in the transfer of the ammonia molecule from PurQ to PurL. The sequence is that of Phosphoribosylformylglycinamidine synthase subunit PurL from Bacillus anthracis (strain A0248).